The chain runs to 360 residues: Phosphoserine aminotransferase (360 aa).

Arg-41 provides a ligand contact to L-glutamate. Positions 101, 152, 172, and 195 each coordinate pyridoxal 5'-phosphate. Lys-196 carries the N6-(pyridoxal phosphate)lysine modification. Position 237–238 (237–238 (NT)) interacts with pyridoxal 5'-phosphate.

Belongs to the class-V pyridoxal-phosphate-dependent aminotransferase family. SerC subfamily. Homodimer. Pyridoxal 5'-phosphate serves as cofactor.

Its subcellular location is the cytoplasm. It carries out the reaction O-phospho-L-serine + 2-oxoglutarate = 3-phosphooxypyruvate + L-glutamate. The catalysed reaction is 4-(phosphooxy)-L-threonine + 2-oxoglutarate = (R)-3-hydroxy-2-oxo-4-phosphooxybutanoate + L-glutamate. The protein operates within amino-acid biosynthesis; L-serine biosynthesis; L-serine from 3-phospho-D-glycerate: step 2/3. It participates in cofactor biosynthesis; pyridoxine 5'-phosphate biosynthesis; pyridoxine 5'-phosphate from D-erythrose 4-phosphate: step 3/5. Catalyzes the reversible conversion of 3-phosphohydroxypyruvate to phosphoserine and of 3-hydroxy-2-oxo-4-phosphonooxybutanoate to phosphohydroxythreonine. This Burkholderia orbicola (strain MC0-3) protein is Phosphoserine aminotransferase.